Reading from the N-terminus, the 415-residue chain is Gamma-glutamyl phosphate reductase (415 aa).

The protein belongs to the gamma-glutamyl phosphate reductase family.

The protein resides in the cytoplasm. It catalyses the reaction L-glutamate 5-semialdehyde + phosphate + NADP(+) = L-glutamyl 5-phosphate + NADPH + H(+). Its pathway is amino-acid biosynthesis; L-proline biosynthesis; L-glutamate 5-semialdehyde from L-glutamate: step 2/2. Its function is as follows. Catalyzes the NADPH-dependent reduction of L-glutamate 5-phosphate into L-glutamate 5-semialdehyde and phosphate. The product spontaneously undergoes cyclization to form 1-pyrroline-5-carboxylate. This Mycobacterium sp. (strain JLS) protein is Gamma-glutamyl phosphate reductase.